The primary structure comprises 496 residues: DNA-directed DNA/RNA polymerase mu (496 aa).

The interval 1 to 22 is disordered; the sequence is MLPKRRRVRAGSPHSAVASSTP. Residue serine 12 is modified to Phosphoserine. The segment covering 12–22 has biased composition (low complexity); the sequence is SPHSAVASSTP. The BRCT domain occupies 23–122; it reads PSVVRFPDVA…QPVPEEGRHH (100 aa). Na(+)-binding residues include threonine 241 and valine 243. An involved in ssDNA binding region spans residues 323 to 332; it reads RGKLQGHDVD. Mg(2+) is bound by residues aspartate 330, aspartate 332, and aspartate 420.

It belongs to the DNA polymerase type-X family. Mg(2+) serves as cofactor.

The protein resides in the nucleus. It carries out the reaction DNA(n) + a 2'-deoxyribonucleoside 5'-triphosphate = DNA(n+1) + diphosphate. Gap-filling polymerase involved in repair of DNA double-strand breaks by non-homologous end joining (NHEJ). Participates in immunoglobulin (Ig) light chain gene rearrangement in V(D)J recombination. In Mus musculus (Mouse), this protein is DNA-directed DNA/RNA polymerase mu (Polm).